The following is a 127-amino-acid chain: Auxin-responsive protein SAUR76 (127 aa).

The disordered stretch occupies residues 20–40; sequence SFNTKPNQPPAQTNHSRSSAV.

It belongs to the ARG7 family. As to expression, expressed in cotyledons, hypocotyls and roots of young seedlings. Expressed in emerging lateral root, leaves, flowers, stamens and filaments.

It localises to the nucleus. The protein localises to the cytoplasm. It is found in the cell membrane. May be involved in the regulation of ethylene receptor signaling. Promotes cell expansion and plant growth. Involved in the regulation of cell elongation. In Arabidopsis thaliana (Mouse-ear cress), this protein is Auxin-responsive protein SAUR76.